The following is a 122-amino-acid chain: Small ribosomal subunit protein uS13 (122 aa).

The disordered stretch occupies residues 99-122 (RGQRTHTNARTRKGPAKAIAGKKK).

Belongs to the universal ribosomal protein uS13 family. In terms of assembly, part of the 30S ribosomal subunit. Forms a loose heterodimer with protein S19. Forms two bridges to the 50S subunit in the 70S ribosome.

Its function is as follows. Located at the top of the head of the 30S subunit, it contacts several helices of the 16S rRNA. In the 70S ribosome it contacts the 23S rRNA (bridge B1a) and protein L5 of the 50S subunit (bridge B1b), connecting the 2 subunits; these bridges are implicated in subunit movement. Contacts the tRNAs in the A and P-sites. The sequence is that of Small ribosomal subunit protein uS13 from Rhizobium meliloti (strain 1021) (Ensifer meliloti).